The chain runs to 671 residues: Arginine--tRNA ligase (671 aa).

The short motif at 124–134 is the 'HIGH' region element; it reads PNVAKPMHVGH. The tract at residues 223-254 is disordered; the sequence is KSDAKTAKEVSDQSESDENLKPKDKKKLRKNA. Basic and acidic residues predominate over residues 224–233; sequence SDAKTAKEVS.

This sequence belongs to the class-I aminoacyl-tRNA synthetase family. Monomer.

The protein resides in the cytoplasm. It carries out the reaction tRNA(Arg) + L-arginine + ATP = L-arginyl-tRNA(Arg) + AMP + diphosphate. This Rhodopirellula baltica (strain DSM 10527 / NCIMB 13988 / SH1) protein is Arginine--tRNA ligase.